Here is a 203-residue protein sequence, read N- to C-terminus: Guanylate kinase (203 aa).

The 179-residue stretch at 3-181 (GTLYIVAAPS…AVSEMCAIFT (179 aa)) folds into the Guanylate kinase-like domain. ATP is bound at residue 10–17 (APSGAGKS).

The protein belongs to the guanylate kinase family.

The protein resides in the cytoplasm. The enzyme catalyses GMP + ATP = GDP + ADP. Essential for recycling GMP and indirectly, cGMP. The sequence is that of Guanylate kinase from Xanthomonas oryzae pv. oryzae (strain MAFF 311018).